The sequence spans 588 residues: L-fucose isomerase (588 aa).

Catalysis depends on proton acceptor residues glutamate 335 and aspartate 359. Residues glutamate 335, aspartate 359, and histidine 525 each coordinate Mn(2+).

It belongs to the L-fucose isomerase family. Mn(2+) is required as a cofactor.

Its subcellular location is the cytoplasm. The catalysed reaction is L-fucose = L-fuculose. It participates in carbohydrate degradation; L-fucose degradation; L-lactaldehyde and glycerone phosphate from L-fucose: step 1/3. Functionally, converts the aldose L-fucose into the corresponding ketose L-fuculose. This Streptococcus pneumoniae (strain Hungary19A-6) protein is L-fucose isomerase.